Reading from the N-terminus, the 338-residue chain is Probable cytosolic iron-sulfur protein assembly protein Ciao1 (338 aa).

WD repeat units lie at residues 12 to 51 (GHRGRVWGAGWHPRDPVLATCGEDKTIRIWADDGTGRWVP), 58 to 97 (GHTRTIRDVAWSPCGRFLASASFDATVAIWDRRSGEFECN), 102 to 141 (GHENEVKSVSWSKSGALLATCSRDKSVWIWEVAQEDEYEC), 147 to 186 (THSQDVKKVEWHPNEDVLASASYDNTIQLYREDLADSDWS), 193 to 232 (SHDSTVWSIAFDASGSRLASCSDDQTVRIWQEYKPGNEFG), 234 to 252 (ACPDGKTPVWKCVCTLSGF), 253 to 291 (HSRAVYDISWCKKTGLIATACGDDMVRIFREVAGSPANE), and 302 to 338 (AHSQDANTVEWSPTVAGLLVTTSDDGDVKLWKFEDDE).

Belongs to the WD repeat CIA1 family.

Functionally, essential component of the cytosolic iron-sulfur (Fe/S) protein assembly machinery. Required for the maturation of extramitochondrial Fe/S proteins. The polypeptide is Probable cytosolic iron-sulfur protein assembly protein Ciao1 (Culex quinquefasciatus (Southern house mosquito)).